A 159-amino-acid chain; its full sequence is Cytochrome c-type biogenesis CcmH-like mitochondrial protein (159 aa).

Topologically, residues 1 to 82 (MEKTDEERKK…ETVLYAPKFD (82 aa)) are mitochondrial intermembrane. Positions 27 and 30 each coordinate heme. Residues 83-105 (LQTAALWLTPVIIAGGTAAGIVY) traverse the membrane as a helical segment. The Mitochondrial matrix segment spans residues 106 to 159 (QKHRLRKNVDIMALNLIRGVPLTPKERVTILDVLIPPSPPPQGVVSRLRRWLNR).

The protein belongs to the CcmH/CycL/Ccl2/NrfF family. As to quaternary structure, interacts (via N-terminus) with CYTC-1. Interacts with CCMFN1 and CCMFN2.

Its subcellular location is the mitochondrion inner membrane. Its function is as follows. Plays a central role in mitochondrial cytochrome c maturation. Probable component of a heme lyase complex involved in the reduction of apocytochrome c. Forms a complex with CCMF proteins (CCMFC, CCMFN1 and CCMFN2) that performs the assembly of heme with c-type apocytochromes in mitochondria. The protein is Cytochrome c-type biogenesis CcmH-like mitochondrial protein of Arabidopsis thaliana (Mouse-ear cress).